A 623-amino-acid polypeptide reads, in one-letter code: MPHSDELDAGNVLAVENLNIAFMQDQQKIAAVRNLSFSLQRGETLAIVGESGSGKSVTALALMRLLEQAGGLVQCDKMLLRRRSRDVIELSEQSAAQMRHVRGADMAMIFQEPMTSLNPVFTVGEQIAESIRLHQNASREEAMVEAKRMLDQVRIPEAQTILSRYSHQLSGGMRQRVMIAMALSCRPAVLIADEPTTALDVTIQAQILQLIKVLQKEMSMGVIFITHDMGVVAEIADRVLVMYQGEAVETGTVEQIFHAPQHPYTRALLAAVPQLGAMKGLDYPRRFPLISLEHPAKQEPPIEQKTVVDGEPVLRVRNLVTRFPLRSGLLNRVTREVHAVEKVSFDLWPGETLSLVGESGSGKSTTGRALLRLVESQGGEIIFNGQRIDTLSPGKLQALRRDIQFIFQDPYASLDPRQTIGDSIIEPLRVHGLLPGKDAAARVAWLLERVGLLPEHAWRYPHEFSGGQRQRICIARALALNPKVIIADEAVSALDVSIRGQIINLLLDLQRDFGIAYLFISHDMAVVERISHRVAVMYLGQIVEIGSRCAVFENPQHPYTRKLLAAVPVAEPSRQRPQRVLLSDDLPSNIHLRGEEVAAVSLQCVGPGHYVAQPQSEYAFMRR.

2 consecutive ABC transporter domains span residues 15 to 269 (VENL…RALL) and 314 to 564 (LRVR…RKLL). ATP contacts are provided by residues 49-56 (GESGSGKS) and 357-364 (GESGSGKS).

Belongs to the ABC transporter superfamily. Glutathione importer (TC 3.A.1.5.11) family. The complex is composed of two ATP-binding proteins (GsiA), two transmembrane proteins (GsiC and GsiD) and a solute-binding protein (GsiB).

The protein localises to the cell inner membrane. It carries out the reaction glutathione(out) + ATP + H2O = glutathione(in) + ADP + phosphate + H(+). In terms of biological role, part of the ABC transporter complex GsiABCD involved in glutathione import. Responsible for energy coupling to the transport system. The protein is Glutathione import ATP-binding protein GsiA of Shigella flexneri.